The following is a 333-amino-acid chain: Glyceraldehyde-3-phosphate dehydrogenase (333 aa).

Ser1 bears the N-acetylserine mark. Residues 10–11 (RI), Asp31, and Met76 contribute to the NAD(+) site. D-glyceraldehyde 3-phosphate-binding positions include 147–149 (SCT), Thr178, 207–208 (TG), and Arg230. The active-site Nucleophile is Cys148. Residue Asn312 participates in NAD(+) binding.

The protein belongs to the glyceraldehyde-3-phosphate dehydrogenase family. As to quaternary structure, homotetramer.

Its subcellular location is the cytoplasm. The enzyme catalyses D-glyceraldehyde 3-phosphate + phosphate + NAD(+) = (2R)-3-phospho-glyceroyl phosphate + NADH + H(+). It functions in the pathway carbohydrate degradation; glycolysis; pyruvate from D-glyceraldehyde 3-phosphate: step 1/5. The sequence is that of Glyceraldehyde-3-phosphate dehydrogenase from Panulirus versicolor (Painted spiny lobster).